A 605-amino-acid chain; its full sequence is UvrABC system protein C (605 aa).

A GIY-YIG domain is found at 14–92 (QSCGVYKMVG…IKSLKPLYNI (79 aa)). A UVR domain is found at 202–237 (KEVKEQLLFTMRKCSSEENYELAAIYRDRVKFLEQI).

The protein belongs to the UvrC family. As to quaternary structure, interacts with UvrB in an incision complex.

It localises to the cytoplasm. In terms of biological role, the UvrABC repair system catalyzes the recognition and processing of DNA lesions. UvrC both incises the 5' and 3' sides of the lesion. The N-terminal half is responsible for the 3' incision and the C-terminal half is responsible for the 5' incision. This is UvrABC system protein C from Wolbachia sp. subsp. Drosophila simulans (strain wRi).